Consider the following 126-residue polypeptide: Holo-[acyl-carrier-protein] synthase (126 aa).

The Mg(2+) site is built by Asp9 and Glu58.

The protein belongs to the P-Pant transferase superfamily. AcpS family. Mg(2+) serves as cofactor.

The protein resides in the cytoplasm. It carries out the reaction apo-[ACP] + CoA = holo-[ACP] + adenosine 3',5'-bisphosphate + H(+). Its function is as follows. Transfers the 4'-phosphopantetheine moiety from coenzyme A to a Ser of acyl-carrier-protein. The chain is Holo-[acyl-carrier-protein] synthase from Escherichia coli O127:H6 (strain E2348/69 / EPEC).